The following is a 452-amino-acid chain: Pup--protein ligase (452 aa).

Glu-9 contributes to the Mg(2+) binding site. Arg-53 serves as a coordination point for ATP. Mg(2+) is bound at residue Tyr-55. The active-site Proton acceptor is the Asp-57. Glu-63 is a Mg(2+) binding site. Thr-66 and Trp-419 together coordinate ATP.

It belongs to the Pup ligase/Pup deamidase family. Pup-conjugating enzyme subfamily.

It catalyses the reaction ATP + [prokaryotic ubiquitin-like protein]-L-glutamate + [protein]-L-lysine = ADP + phosphate + N(6)-([prokaryotic ubiquitin-like protein]-gamma-L-glutamyl)-[protein]-L-lysine.. It participates in protein degradation; proteasomal Pup-dependent pathway. Its pathway is protein modification; protein pupylation. Functionally, catalyzes the covalent attachment of the prokaryotic ubiquitin-like protein modifier Pup to the proteasomal substrate proteins, thereby targeting them for proteasomal degradation. This tagging system is termed pupylation. The ligation reaction involves the side-chain carboxylate of the C-terminal glutamate of Pup and the side-chain amino group of a substrate lysine. This chain is Pup--protein ligase, found in Nocardia farcinica (strain IFM 10152).